The sequence spans 882 residues: DNA mismatch repair protein MutS (882 aa).

Residue 656–663 (GPNASGKS) participates in ATP binding.

The protein belongs to the DNA mismatch repair MutS family.

Its function is as follows. This protein is involved in the repair of mismatches in DNA. It is possible that it carries out the mismatch recognition step. This protein has a weak ATPase activity. This is DNA mismatch repair protein MutS from Synechococcus elongatus (strain ATCC 33912 / PCC 7942 / FACHB-805) (Anacystis nidulans R2).